Consider the following 90-residue polypeptide: MSRTVFCARLKKEGEGLDFQLYPGELGKRIFDNISKEAWAQWQHKQTMLINEKKLNMMDPEHRKLLETEMVNFLFEGKDVHIEGYTPPSE.

The protein belongs to the Fe(2+)-trafficking protein family.

Its function is as follows. Could be a mediator in iron transactions between iron acquisition and iron-requiring processes, such as synthesis and/or repair of Fe-S clusters in biosynthetic enzymes. The protein is Probable Fe(2+)-trafficking protein of Vibrio parahaemolyticus serotype O3:K6 (strain RIMD 2210633).